The following is an 875-amino-acid chain: MYTGNQLRDMFLNFFASKGHRILPSASLIPKDDPTLLLTVAGMVPFKPYFMRKVEPPFPRATTSQKCVRTPDLEVVGKTARHHTFFEMLGNFSFGDYFKAEAIPWAWEFVTEVLKLPIDQLWITVHPEDEEAKNLWIEKTGVSPERIKYDPENLWAAGPVGPCGYCSEIYVDLGESRGCGKPDCALGCDCDRFLEIWNLVFMQYNRDEAGLLTPLPKQNIDTGMGLERIASVMQGAASNFDTDLFLPIINKVAELSGIPYHDSPKNDVAMKVVADHTRAVSFMLSDGIRPGSEGRGYVLRRILRRAIRYARLLGIDKPFLEQIFLIIQKDYSHHYPELKENENFILNHLRLEEKNFQATLEQGTQILQDKVKTLQEAGETMLSGADAFYLYETYGFPVELTEEMLIEQGMSVDMETFNAAAEEHRRLAKEQSQQMKAVQESAAISEKAKALGTTPFLGYHELAAHTKVEALFRDGEEVKDAAEGDEVLIFLRESPFYAESGGQISDSGVIRSLRAEAKLIEVKKGVTGTVYHRFLLTQGVLHTGDEVEALVDEHLRLATARHHSATHLLQAALRAVLGEHVQQAGSLVTPDRLRFDFTHFSALTSAELQRVEDLLNEAVLANMPVAAEEMSLDAAKASGATALFGEKYGDTVRVVSMGDYSLELCGGTHIRATGDIGLVKIISEGGIGAGLRRIEAVAGAEALKYMRSLNDQILDAAQLLKAQPSDLLKRIQGLLVQVKDLEKEVQQLNAKVAKSEVESLLQQVKDVEGVPVLAAKVSAQDMDTLRNTADLLKDKMKDGVLVLGAAVEGKVNWVTVVTPVGLRGLHAGQIIKEVAKITGGGGGGRPDMAQAGGKDAAKLGEALDQVPAIIKSHIK.

Zn(2+) contacts are provided by His-563, His-567, Cys-665, and His-669.

The protein belongs to the class-II aminoacyl-tRNA synthetase family. The cofactor is Zn(2+).

It localises to the cytoplasm. The catalysed reaction is tRNA(Ala) + L-alanine + ATP = L-alanyl-tRNA(Ala) + AMP + diphosphate. Catalyzes the attachment of alanine to tRNA(Ala) in a two-step reaction: alanine is first activated by ATP to form Ala-AMP and then transferred to the acceptor end of tRNA(Ala). Also edits incorrectly charged Ser-tRNA(Ala) and Gly-tRNA(Ala) via its editing domain. The sequence is that of Alanine--tRNA ligase from Desulfitobacterium hafniense (strain Y51).